The following is a 672-amino-acid chain: GPI mannosyltransferase pigv-1 (672 aa).

The Cytoplasmic portion of the chain corresponds to 1-134; the sequence is MRRREPGRDV…TQRCLGFCFR (134 aa). The segment covering 82–94 has biased composition (basic and acidic residues); the sequence is REESDSSSSREDS. The segment at 82-115 is disordered; the sequence is REESDSSSSREDSPLGSTETGESCSTTDDEESKE. Residues 97–107 are compositionally biased toward low complexity; sequence GSTETGESCST. The helical transmembrane segment at 135–155 threads the bilayer; that stretch reads QLFFSRMWVFILQFIASYYAG. Topologically, residues 156 to 239 are extracellular; that stretch reads DRFRTDGFNL…NGMESVFGWT (84 aa). A helical membrane pass occupies residues 240–260; the sequence is FPPWVTITLAAVFVNLFCFLL. Topologically, residues 261 to 277 are cytoplasmic; it reads CGMTLYQVVLIMTRSVK. 2 consecutive transmembrane segments (helical) span residues 278 to 298 and 299 to 319; these read ISLLAVSIFAFNPASIFFSSA and YSESMFFTMTLTGFVFMLFGL. Over 320-345 the chain is Extracellular; that stretch reads RGKGFWHRMLKGFTGTICFGLTFAVR. The helical transmembrane segment at 346–366 threads the bilayer; it reads SNGLLNFLYVAWIWCGTLLWD. The Cytoplasmic portion of the chain corresponds to 367-423; that stretch reads EEMPIPDCHKLISTLAATKNERYKQEWQAKFWRFQQKRKQNRKVFRWTDPNFSRCVT. Residues 424-444 traverse the membrane as a helical segment; that stretch reads LFIVIVCAISATLLFFTPYVF. The Extracellular segment spans residues 445–520; it reads MTNFTADEFC…WSVKFFGYWK (76 aa). Residues 521–541 form a helical membrane-spanning segment; sequence IKKIPCFLMMLPAAILTVLAI. The Cytoplasmic portion of the chain corresponds to 542–569; it reads KSSWNDVFLNKRWNNIWVLTARSDHSLP. The chain crosses the membrane as a helical span at residues 570–590; that stretch reads MAIHSSVLLFVAIFYINSEVF. Topologically, residues 591–592 are extracellular; sequence TR. Residues 593–613 form a helical membrane-spanning segment; the sequence is IIFSSSPFIYIYIATYIDKLT. Topologically, residues 614–648 are cytoplasmic; that stretch reads QGTIAGNRLWQYFESPGILPFFVFRRVWQDGWRGK. The chain crosses the membrane as a helical span at residues 649-669; that stretch reads LLYIYILGYFVFGTMAHSAWL. Topologically, residues 670-672 are extracellular; the sequence is PFT.

Belongs to the PIGV family. In terms of tissue distribution, expressed in epithelial tissues including the epidermis, pharynx, intestine, rectum and excretory cell during embryogenesis.

Its subcellular location is the endoplasmic reticulum membrane. The protein operates within glycolipid biosynthesis; glycosylphosphatidylinositol-anchor biosynthesis. In terms of biological role, alpha-1,6-mannosyltransferase involved in glycosylphosphatidylinositol-anchor biosynthesis. Transfers the second mannose to the glycosylphosphatidylinositol during GPI precursor assembly. Required for maintenance of epithelial integrity during embryogenesis. This Caenorhabditis elegans protein is GPI mannosyltransferase pigv-1.